The primary structure comprises 69 residues: Conotoxin reg3f (69 aa).

An N-terminal signal peptide occupies residues 1–20 (MMSKLGVLLTICLLLFPLSA). Positions 21 to 52 (LPLDGDQPADQPAERMQDISPEQNPLFHPDKR) are excised as a propeptide. 3 cysteine pairs are disulfide-bonded: Cys54/Cys68, Cys55/Cys66, and Cys60/Cys69. At Cys69 the chain carries Cysteine amide.

In terms of tissue distribution, expressed by the venom duct.

It is found in the secreted. In Conus regius (Crown cone), this protein is Conotoxin reg3f.